A 293-amino-acid chain; its full sequence is Nucleotide-binding protein BBR47_52620 (293 aa).

ATP is bound at residue 17–24; it reads GMSGAGKT. 68–71 contributes to the GTP binding site; that stretch reads DLRG.

Belongs to the RapZ-like family.

Displays ATPase and GTPase activities. The polypeptide is Nucleotide-binding protein BBR47_52620 (Brevibacillus brevis (strain 47 / JCM 6285 / NBRC 100599)).